Reading from the N-terminus, the 96-residue chain is Accessory cholera enterotoxin (96 aa).

The chain crosses the membrane as a helical span at residues 76 to 96; sequence QALAIVLQALMTRFALRALNL.

The protein localises to the secreted. The protein resides in the host cell membrane. Increases short-circuit current in rabbit ileal tissue mounted in Ussing chambers, by increasing the potential difference. Cultures of V.cholerae containing the cloned ace gene cause fluid secretion in ligated rabbit ileal loops. The protein is Accessory cholera enterotoxin (ace) of Vibrio cholerae serotype O1 (strain ATCC 39315 / El Tor Inaba N16961).